Consider the following 391-residue polypeptide: Formate-dependent phosphoribosylglycinamide formyltransferase (391 aa).

N(1)-(5-phospho-beta-D-ribosyl)glycinamide is bound by residues 20-21 (EL) and Glu80. Residues Arg112, Lys153, 158 to 163 (SSGKGQ), 193 to 196 (EGFV), and Glu201 each bind ATP. Positions 117–306 (RLAAETLGLP…EFALHVRAIL (190 aa)) constitute an ATP-grasp domain. Positions 265 and 277 each coordinate Mg(2+). Residues Asp284, Lys354, and 361–362 (RR) each bind N(1)-(5-phospho-beta-D-ribosyl)glycinamide.

Belongs to the PurK/PurT family. Homodimer.

It carries out the reaction N(1)-(5-phospho-beta-D-ribosyl)glycinamide + formate + ATP = N(2)-formyl-N(1)-(5-phospho-beta-D-ribosyl)glycinamide + ADP + phosphate + H(+). It functions in the pathway purine metabolism; IMP biosynthesis via de novo pathway; N(2)-formyl-N(1)-(5-phospho-D-ribosyl)glycinamide from N(1)-(5-phospho-D-ribosyl)glycinamide (formate route): step 1/1. In terms of biological role, involved in the de novo purine biosynthesis. Catalyzes the transfer of formate to 5-phospho-ribosyl-glycinamide (GAR), producing 5-phospho-ribosyl-N-formylglycinamide (FGAR). Formate is provided by PurU via hydrolysis of 10-formyl-tetrahydrofolate. This chain is Formate-dependent phosphoribosylglycinamide formyltransferase, found in Shewanella sp. (strain W3-18-1).